The sequence spans 256 residues: Eukaryotic translation initiation factor 3 subunit J (256 aa).

2 stretches are compositionally biased toward acidic residues: residues 1–14 (MAENDSWDADDFEP) and 35–54 (EGEDEEEDVKDNWDDEEEAE). Disordered stretches follow at residues 1 to 109 (MAEN…SPEE) and 214 to 237 (QSKAKKKKKGVVPGGGLKANMKND). The segment covering 55–101 (AATKQEAQKTVEPKVSEKKKLLEKIREKEKLHKKRQEEVNQQEKEGT) has biased composition (basic and acidic residues). Positions 70–99 (SEKKKLLEKIREKEKLHKKRQEEVNQQEKE) form a coiled coil.

This sequence belongs to the eIF-3 subunit J family. As to quaternary structure, component of the eukaryotic translation initiation factor 3 (eIF-3) complex, which is composed of 13 subunits: eif3a, eif3b, eif3c, eif3d, eif3e, eif3f, eif3g, eif3h, eif3i, eif3j, eif3k, eif3l and eif3m.

It is found in the cytoplasm. Component of the eukaryotic translation initiation factor 3 (eIF-3) complex, which is involved in protein synthesis of a specialized repertoire of mRNAs and, together with other initiation factors, stimulates binding of mRNA and methionyl-tRNAi to the 40S ribosome. The eIF-3 complex specifically targets and initiates translation of a subset of mRNAs involved in cell proliferation. This Xenopus tropicalis (Western clawed frog) protein is Eukaryotic translation initiation factor 3 subunit J (eif3j).